The following is a 244-amino-acid chain: Phosphoadenosine 5'-phosphosulfate reductase (244 aa).

The active-site Nucleophile; cysteine thiosulfonate intermediate is Cys-239.

Belongs to the PAPS reductase family. CysH subfamily.

It localises to the cytoplasm. It catalyses the reaction [thioredoxin]-disulfide + sulfite + adenosine 3',5'-bisphosphate + 2 H(+) = [thioredoxin]-dithiol + 3'-phosphoadenylyl sulfate. Its pathway is sulfur metabolism; hydrogen sulfide biosynthesis; sulfite from sulfate: step 3/3. Functionally, catalyzes the formation of sulfite from phosphoadenosine 5'-phosphosulfate (PAPS) using thioredoxin as an electron donor. This chain is Phosphoadenosine 5'-phosphosulfate reductase, found in Buchnera aphidicola subsp. Acyrthosiphon pisum (strain 5A).